A 468-amino-acid chain; its full sequence is Mannan endo-1,4-beta-mannosidase 3 (468 aa).

A signal peptide spans 1-23; sequence MTVRPRPAAAAIIIAAVFGAAAA. Trp86 is a substrate binding site. Asn152 carries N-linked (GlcNAc...) asparagine glycosylation. Asn201 contributes to the substrate binding site. Glu202 serves as the catalytic Proton donor. Tyr281 is a substrate binding site. N-linked (GlcNAc...) asparagine glycosylation occurs at Asn300. Glu321 (nucleophile) is an active-site residue. N-linked (GlcNAc...) asparagine glycosylation is present at Asn333. Substrate-binding residues include Trp364 and Asp371. The interval 415–436 is disordered; the sequence is LRRRRRRPASSHRKTRLGSGGD. Over residues 416 to 430 the composition is skewed to basic residues; sequence RRRRRRPASSHRKTR.

It belongs to the glycosyl hydrolase 5 (cellulase A) family. In terms of tissue distribution, expressed in seeds.

It is found in the secreted. It catalyses the reaction Random hydrolysis of (1-&gt;4)-beta-D-mannosidic linkages in mannans, galactomannans and glucomannans.. The sequence is that of Mannan endo-1,4-beta-mannosidase 3 (MAN3) from Oryza sativa subsp. japonica (Rice).